Reading from the N-terminus, the 454-residue chain is Pup--protein ligase (454 aa).

E9 contributes to the Mg(2+) binding site. Position 53 (R53) interacts with ATP. Y55 serves as a coordination point for Mg(2+). D57 serves as the catalytic Proton acceptor. Residue E63 coordinates Mg(2+). The ATP site is built by T66 and W420.

Belongs to the Pup ligase/Pup deamidase family. Pup-conjugating enzyme subfamily.

The catalysed reaction is ATP + [prokaryotic ubiquitin-like protein]-L-glutamate + [protein]-L-lysine = ADP + phosphate + N(6)-([prokaryotic ubiquitin-like protein]-gamma-L-glutamyl)-[protein]-L-lysine.. The protein operates within protein degradation; proteasomal Pup-dependent pathway. It participates in protein modification; protein pupylation. Catalyzes the covalent attachment of the prokaryotic ubiquitin-like protein modifier Pup to the proteasomal substrate proteins, thereby targeting them for proteasomal degradation. This tagging system is termed pupylation. The ligation reaction involves the side-chain carboxylate of the C-terminal glutamate of Pup and the side-chain amino group of a substrate lysine. The polypeptide is Pup--protein ligase (Paenarthrobacter aurescens (strain TC1)).